Here is a 390-residue protein sequence, read N- to C-terminus: Probable tRNA pseudouridine synthase D (390 aa).

The active-site Nucleophile is the aspartate 93. In terms of domain architecture, TRUD spans 166–353 (YVLNYYGIQR…YGTRRKMITP (188 aa)).

It belongs to the pseudouridine synthase TruD family.

The enzyme catalyses uridine(13) in tRNA = pseudouridine(13) in tRNA. Functionally, could be responsible for synthesis of pseudouridine from uracil-13 in transfer RNAs. The polypeptide is Probable tRNA pseudouridine synthase D (Methanococcus maripaludis (strain C5 / ATCC BAA-1333)).